Here is a 448-residue protein sequence, read N- to C-terminus: MANVVENLGKLERRVTISLPKDTVQKEIDARIQKLAKNVRMPGFRPGKVPLKMVAQQYSGQVEAEVLSDKIGQEFFTISRAENLRVAGQPSFEPKQEQAEDAYAFDATFEVYPEVKIGDLATAEVERSTTTIGDAEIDRTLDILRKQRVHFHARGEAGEHGDGGADTAAKNGDRVTVDFVGKIDDVAFQGGTAEDFPFVLGEGRMLPEFETAALGLKVGEQRTFDLKFPDDYHGKDVAGKTAQFTVTMKKIEWPHLPEIDAEFAKSLGIEDGDLTKMRAEIKENLEREAKRRTQSIVKNQVMDALLKISELDVPKALIEQDQQRLVEMARQDLAQRGVPNAKDAPIPAEMFAEQAERRVKLGLVLAELVKANGLEAKPEQIRAEVDEFAKSYEDPKEVVRWYYSNQQRLAEMEAFVVESNVVDFVLGKAKVTDKEVSFEALASASAQA.

One can recognise a PPIase FKBP-type domain in the interval 172 to 257; that stretch reads GDRVTVDFVG…MKKIEWPHLP (86 aa).

This sequence belongs to the FKBP-type PPIase family. Tig subfamily.

It is found in the cytoplasm. The enzyme catalyses [protein]-peptidylproline (omega=180) = [protein]-peptidylproline (omega=0). In terms of biological role, involved in protein export. Acts as a chaperone by maintaining the newly synthesized protein in an open conformation. Functions as a peptidyl-prolyl cis-trans isomerase. The polypeptide is Trigger factor (Burkholderia cenocepacia (strain ATCC BAA-245 / DSM 16553 / LMG 16656 / NCTC 13227 / J2315 / CF5610) (Burkholderia cepacia (strain J2315))).